The primary structure comprises 59 residues: Large ribosomal subunit protein uL30 (59 aa).

Belongs to the universal ribosomal protein uL30 family. As to quaternary structure, part of the 50S ribosomal subunit.

This Lactococcus lactis subsp. lactis (strain IL1403) (Streptococcus lactis) protein is Large ribosomal subunit protein uL30.